A 539-amino-acid chain; its full sequence is Membrane protein insertase YidC (539 aa).

Residues isoleucine 7 to methionine 27 traverse the membrane as a helical segment. Residues glutamine 32–alanine 64 are disordered. A run of 3 helical transmembrane segments spans residues tyrosine 347–tryptophan 367, glycine 418–leucine 438, and isoleucine 498–valine 518.

This sequence belongs to the OXA1/ALB3/YidC family. Type 1 subfamily. As to quaternary structure, interacts with the Sec translocase complex via SecD. Specifically interacts with transmembrane segments of nascent integral membrane proteins during membrane integration.

It localises to the cell inner membrane. Functionally, required for the insertion and/or proper folding and/or complex formation of integral membrane proteins into the membrane. Involved in integration of membrane proteins that insert both dependently and independently of the Sec translocase complex, as well as at least some lipoproteins. Aids folding of multispanning membrane proteins. The chain is Membrane protein insertase YidC from Nitratidesulfovibrio vulgaris (strain DSM 19637 / Miyazaki F) (Desulfovibrio vulgaris).